Reading from the N-terminus, the 298-residue chain is 33 kDa chaperonin (298 aa).

Intrachain disulfides connect C239–C241 and C272–C275.

This sequence belongs to the HSP33 family. Under oxidizing conditions two disulfide bonds are formed involving the reactive cysteines. Under reducing conditions zinc is bound to the reactive cysteines and the protein is inactive.

The protein localises to the cytoplasm. In terms of biological role, redox regulated molecular chaperone. Protects both thermally unfolding and oxidatively damaged proteins from irreversible aggregation. Plays an important role in the bacterial defense system toward oxidative stress. The chain is 33 kDa chaperonin from Picosynechococcus sp. (strain ATCC 27264 / PCC 7002 / PR-6) (Agmenellum quadruplicatum).